The chain runs to 243 residues: uncharacterized protein (243 aa).

The protein belongs to the ycf23 family.

It is found in the plastid. Its subcellular location is the cyanelle. This is an uncharacterized protein from Cyanophora paradoxa.